The chain runs to 382 residues: Sphingoid long-chain base transporter RSB1 (382 aa).

At 1–34 (MSNATNNTLGSLLPQLEAAANSNSLYGGMVPNLR) the chain is on the extracellular side. N-linked (GlcNAc...) asparagine glycans are attached at residues N3 and N6. The helical transmembrane segment at 35 to 55 (FNITMIVIWGILLTIHVVQLL) threads the bilayer. Over 56–57 (MR) the chain is Cytoplasmic. The chain crosses the membrane as a helical span at residues 58-78 (QYWFSIAFICTGILEVLGYIG). Residues 79-90 (RTWSHSNVADMD) lie on the Extracellular side of the membrane. The chain crosses the membrane as a helical span at residues 91–111 (AFLLNMICLTIAPVFTMGGIY). The Cytoplasmic portion of the chain corresponds to 112-135 (YQLAKLIEVYGHRFSLLPSPMAYS). The helical transmembrane segment at 136 to 156 (FIFICSDIVSLVVQAVGGGLC) threads the bilayer. Residues 157 to 171 (GVAVTDGTSTTTGNH) lie on the Extracellular side of the membrane. The chain crosses the membrane as a helical span at residues 172-192 (VFIAGLAIQVASMAIFLMLWF). The Cytoplasmic portion of the chain corresponds to 193–241 (HFLFRIYISVRWEHINSRPISLSLLKISQTEVDYLYREKFHFLRLEPKR). Residues 242–262 (WVFHYFNLAMTVAVLTIFTRC) form a helical membrane-spanning segment. Residues 263-281 (CYRLAELVVGWDGYLITHE) are Extracellular-facing. A helical transmembrane segment spans residues 282-302 (WYFIILDALMMAIATVTLTIF). The Cytoplasmic portion of the chain corresponds to 303–382 (HPGFAFKGRS…LFSSKKKAKL (80 aa)).

Belongs to the lipid-translocating exporter (LTE) (TC 9.A.26.1) family.

The protein resides in the cell membrane. Functionally, catalyzes the ATP-dependent translocation of sphingoid long-chain bases (LCBs) from the cytoplasmic site toward the extracytoplasmic side of the membrane (flip-flop). Involved in the establishment of the functional lipid asymmetry of the plasma membrane. Regulates intracellular levels of LCBs, sphingolipid precursors that are growth inhibitory at increased levels. The polypeptide is Sphingoid long-chain base transporter RSB1 (RSB1) (Saccharomyces cerevisiae (strain Lalvin EC1118 / Prise de mousse) (Baker's yeast)).